The following is a 269-amino-acid chain: Shikimate dehydrogenase (NADP(+)) (269 aa).

Residues 17 to 19 (SKS) and Thr64 each bind shikimate. Lys68 functions as the Proton acceptor in the catalytic mechanism. Asp80 contacts NADP(+). Residues Asn89 and Asp105 each contribute to the shikimate site. Residues 130 to 134 (GAGGA), 154 to 159 (NRTRAK), and Met213 each bind NADP(+). A shikimate-binding site is contributed by Tyr215. Position 237 (Gly237) interacts with NADP(+).

It belongs to the shikimate dehydrogenase family. Homodimer.

It carries out the reaction shikimate + NADP(+) = 3-dehydroshikimate + NADPH + H(+). It functions in the pathway metabolic intermediate biosynthesis; chorismate biosynthesis; chorismate from D-erythrose 4-phosphate and phosphoenolpyruvate: step 4/7. Involved in the biosynthesis of the chorismate, which leads to the biosynthesis of aromatic amino acids. Catalyzes the reversible NADPH linked reduction of 3-dehydroshikimate (DHSA) to yield shikimate (SA). The protein is Shikimate dehydrogenase (NADP(+)) of Neisseria meningitidis serogroup C (strain 053442).